The following is a 452-amino-acid chain: Translation initiation factor eIF2B subunit gamma (452 aa).

Met1 is modified (N-acetylmethionine). Phosphoserine is present on Ser260.

It belongs to the eIF-2B gamma/epsilon subunits family. In terms of assembly, component of the translation initiation factor 2B (eIF2B) complex which is a heterodecamer of two sets of five different subunits: alpha, beta, gamma, delta and epsilon. Subunits alpha, beta and delta comprise a regulatory subcomplex and subunits epsilon and gamma comprise a catalytic subcomplex. Within the complex, the hexameric regulatory complex resides at the center, with the two heterodimeric catalytic subcomplexes bound on opposite sides.

Its subcellular location is the cytoplasm. The protein resides in the cytosol. Its activity is regulated as follows. Activated by the chemical integrated stress response (ISR) inhibitor ISRIB which stimulates guanine nucleotide exchange factor activity for both phosphorylated and unphosphorylated eIF2. Its function is as follows. Acts as a component of the translation initiation factor 2B (eIF2B) complex, which catalyzes the exchange of GDP for GTP on the eukaryotic initiation factor 2 (eIF2) complex gamma subunit. Its guanine nucleotide exchange factor activity is repressed when bound to eIF2 complex phosphorylated on the alpha subunit, thereby limiting the amount of methionyl-initiator methionine tRNA available to the ribosome and consequently global translation is repressed. This is Translation initiation factor eIF2B subunit gamma (EIF2B3) from Macaca fascicularis (Crab-eating macaque).